Reading from the N-terminus, the 119-residue chain is MARFVAVALLVLLSLSGLETIQHAPKIQVYSRHPAENGKPNFLNCYVSGFHPSDIEVDLLKNGKKIEKVEHSDLSFSKDWSFYLLYYTEFTPNEKDEYACRVSHVTFSTPKTVKWDRNM.

A signal peptide spans 1–20 (MARFVAVALLVLLSLSGLET). Residues 25-114 (PKIQVYSRHP…VTFSTPKTVK (90 aa)) form the Ig-like C1-type domain. A disulfide bond links Cys-45 and Cys-100.

Belongs to the beta-2-microglobulin family. Heterodimer of an alpha chain and a beta chain. Beta-2-microglobulin is the beta-chain of major histocompatibility complex class I molecules.

It localises to the secreted. Functionally, component of the class I major histocompatibility complex (MHC). Involved in the presentation of peptide antigens to the immune system. This chain is Beta-2-microglobulin (B2M), found in Callicebus personatus personatus (Masked titi).